We begin with the raw amino-acid sequence, 259 residues long: Thiazole synthase (259 aa).

Lys100 serves as the catalytic Schiff-base intermediate with DXP. 1-deoxy-D-xylulose 5-phosphate is bound by residues Gly161, 187–188 (AG), and 209–210 (AS).

The protein belongs to the ThiG family. In terms of assembly, homotetramer. Forms heterodimers with either ThiH or ThiS.

It localises to the cytoplasm. The enzyme catalyses [ThiS sulfur-carrier protein]-C-terminal-Gly-aminoethanethioate + 2-iminoacetate + 1-deoxy-D-xylulose 5-phosphate = [ThiS sulfur-carrier protein]-C-terminal Gly-Gly + 2-[(2R,5Z)-2-carboxy-4-methylthiazol-5(2H)-ylidene]ethyl phosphate + 2 H2O + H(+). Its pathway is cofactor biosynthesis; thiamine diphosphate biosynthesis. Its function is as follows. Catalyzes the rearrangement of 1-deoxy-D-xylulose 5-phosphate (DXP) to produce the thiazole phosphate moiety of thiamine. Sulfur is provided by the thiocarboxylate moiety of the carrier protein ThiS. In vitro, sulfur can be provided by H(2)S. The polypeptide is Thiazole synthase (Salinispora arenicola (strain CNS-205)).